The primary structure comprises 184 residues: Ras-related protein Rap-1b-like protein (184 aa).

Position 10-18 (10-18) interacts with GTP; it reads GSRGVGKSA. An Effector region motif is present at residues 32 to 40; that stretch reads YDPTIEDSY. GTP-binding positions include 57–61, 116–119, and 147–149; these read DTAGT, NKCD, and SAK. The S-geranylgeranyl cysteine moiety is linked to residue cysteine 181. A propeptide spans 182–184 (removed in mature form); that stretch reads QLL.

Belongs to the small GTPase superfamily. Ras family.

Its subcellular location is the cell membrane. The protein resides in the cytoplasm. It is found in the cytosol. The catalysed reaction is GTP + H2O = GDP + phosphate + H(+). Probable GTP-binding protein with intrinsic GTPase activity. The sequence is that of Ras-related protein Rap-1b-like protein from Homo sapiens (Human).